The chain runs to 651 residues: MTHPSFIRLRFAFKLSFAIVAALFLGFHLQLETPRWSVLTAAIVSAGPAFAAGGEPFSGAIRHRGWLRIIGTFIGCIGGLVIIVLTIRAPVLTLMLCCLWAGICTWISSLVRVENSYAFGLAGYTALIIIVTTGETPLLTPQFAVERCSEIVLGIVCAVMADLLFSPRSIKQDIDRLVDKVLVDQYRLLQLCIQPAEKSEIDRAWNELVKNTTSLNGMRSYLMMESSRWQRCNRRLQVLHTESLALITQACETYLVMSNHPEVISAELKTMLSEPAQTPAEIHQQMKKLRQFIAASHSEAIPHTISSWVGAATRYLLLSKGIQTNSSINQVEEDILAGDAPVKPISAEGHHAMINGLRTGIATAIGGLFWLWTGWTSGAGCMVMIAVVTSLAMRTPNPRRMALDFLVGVIIALPIGALYFMFIIPSTQQSMLLLCISLGVLAFIIGIEVQKRRLGSLGTLASTINIIVLSNPMIFNVRQFLDSALGQIVGCFVSLIVLLLIRDNAKDRTGRTLLNRFVYSAVSALTTNKTKRGENHLPALYQQLNQLLMMFPADIDKYRLALTLIIAHQRLNRTEIPVNAELSAFHKQIRSTAERVITVNNDQKRRYYFARLLQELDQYQQKLVDYQAADAVIRPVKRLTEMLRKYQSALI.

11 consecutive transmembrane segments (helical) span residues 11–31 (FAFK…HLQL), 41–61 (AAIV…SGAI), 67–87 (LRII…VLTI), 91–111 (VLTL…SSLV), 119–139 (FGLA…TPLL), 150–170 (EIVL…PRSI), 368–388 (LFWL…IAVV), 405–425 (FLVG…FIIP), 429–449 (QSML…GIEV), 455–475 (GSLG…PMIF), and 481–501 (LDSA…LLLI).

This sequence belongs to the aromatic acid exporter ArAE (TC 2.A.85) family.

Its subcellular location is the cell inner membrane. Its function is as follows. Forms an efflux pump with AaeA. Could function as a metabolic relief valve, allowing to eliminate certain compounds when they accumulate to high levels in the cell. The chain is p-hydroxybenzoic acid efflux pump subunit AaeB from Yersinia pseudotuberculosis serotype O:1b (strain IP 31758).